A 457-amino-acid polypeptide reads, in one-letter code: Trigger factor (457 aa).

Residues 162–243 (GDFVSIDLSA…VQTVKERELP (82 aa)) enclose the PPIase FKBP-type domain. The disordered stretch occupies residues 434-457 (AELFGSSEDETEADASDSAESEDK). The segment covering 440–457 (SEDETEADASDSAESEDK) has biased composition (acidic residues).

It belongs to the FKBP-type PPIase family. Tig subfamily.

It localises to the cytoplasm. It carries out the reaction [protein]-peptidylproline (omega=180) = [protein]-peptidylproline (omega=0). In terms of biological role, involved in protein export. Acts as a chaperone by maintaining the newly synthesized protein in an open conformation. Functions as a peptidyl-prolyl cis-trans isomerase. In Rhodococcus erythropolis (strain PR4 / NBRC 100887), this protein is Trigger factor.